The chain runs to 403 residues: Chromatin structure-remodeling complex subunit SFH1 (403 aa).

Residues 58–115 (FPTFDIDSDSNDEEQSSASAGNDDPQANANGGEAAGVNGQGSGDGGSANTGAGRHGKS) form a disordered region. The span at 63–72 (IDSDSNDEEQ) shows a compositional bias: acidic residues. The segment covering 84–94 (ANANGGEAAGV) has biased composition (low complexity). Gly residues predominate over residues 95–105 (NGQGSGDGGSA).

This sequence belongs to the SNF5 family.

It is found in the nucleus. Its function is as follows. Part of the chromatin structure-remodeling complex (RSC) which is involved in transcription regulation and nucleosome positioning. RSC is responsible for the transfer of a histone octamer from a nucleosome core particle to naked DNA. The reaction requires ATP and involves an activated RSC-nucleosome intermediate. Remodeling reaction also involves DNA translocation, DNA twist and conformational change. As a reconfigurer of centromeric and flanking nucleosomes, RSC complex is required both for proper kinetochore function in chromosome segregation and, via a PKC1-dependent signaling pathway, for organization of the cellular cytoskeleton. This subunit is essential for mitotic growth and required for cell cycle progression. This is Chromatin structure-remodeling complex subunit SFH1 (SFH1) from Candida glabrata (strain ATCC 2001 / BCRC 20586 / JCM 3761 / NBRC 0622 / NRRL Y-65 / CBS 138) (Yeast).